The following is a 264-amino-acid chain: MTIQKFLAMKGKEKIVMVTAYDTPTAKIAEEAGVDIILIGDSIGNNVLGYDSTIPVTMEEIIIHLKAVRRGAPNSFIVADMPFLSYGHSIEEAVKNAGILIKNGANAVKIEGGKFHCNLIEKCINIGIPVMGHLGFTPQSINIFGGYKVQGKKEDSKKTILESAIALEQCGVFSIVLEMVTEELAKEITEKISIPTIGIGAGRYCDGQVLVFHDIVGLNPNFKPKFSKQYANTYSIMLNALKEFKKDVKEKNFPKERHTFKGGK.

Mg(2+)-binding residues include D41 and D80. Residues 41–42 (DS), D80, and K109 contribute to the 3-methyl-2-oxobutanoate site. E111 is a Mg(2+) binding site. Catalysis depends on E178, which acts as the Proton acceptor.

It belongs to the PanB family. Homodecamer; pentamer of dimers. Mg(2+) is required as a cofactor.

Its subcellular location is the cytoplasm. The catalysed reaction is 3-methyl-2-oxobutanoate + (6R)-5,10-methylene-5,6,7,8-tetrahydrofolate + H2O = 2-dehydropantoate + (6S)-5,6,7,8-tetrahydrofolate. The protein operates within cofactor biosynthesis; (R)-pantothenate biosynthesis; (R)-pantoate from 3-methyl-2-oxobutanoate: step 1/2. Catalyzes the reversible reaction in which hydroxymethyl group from 5,10-methylenetetrahydrofolate is transferred onto alpha-ketoisovalerate to form ketopantoate. This chain is 3-methyl-2-oxobutanoate hydroxymethyltransferase, found in Thermosipho melanesiensis (strain DSM 12029 / CIP 104789 / BI429).